The primary structure comprises 540 residues: Putative serine protease F56F10.1 (540 aa).

Residues 1–16 form the signal peptide; it reads MLRNLLLLLLPLLIEA. 2 N-linked (GlcNAc...) asparagine glycosylation sites follow: asparagine 58 and asparagine 87. Serine 182 acts as the Charge relay system in catalysis. 6 N-linked (GlcNAc...) asparagine glycosylation sites follow: asparagine 270, asparagine 300, asparagine 317, asparagine 343, asparagine 441, and asparagine 449. The Charge relay system role is filled by aspartate 453. Asparagine 475 is a glycosylation site (N-linked (GlcNAc...) asparagine). Histidine 479 acts as the Charge relay system in catalysis.

This sequence belongs to the peptidase S28 family.

The chain is Putative serine protease F56F10.1 from Caenorhabditis elegans.